We begin with the raw amino-acid sequence, 100 residues long: uncharacterized protein (100 aa).

This is an uncharacterized protein from Enterobacteria phage T4 (Bacteriophage T4).